Here is a 363-residue protein sequence, read N- to C-terminus: Outer membrane protein P2 (363 aa).

A signal peptide spans 1 to 20 (MKKTLAALIVGAFAASAANA).

The protein belongs to the Gram-negative porin family. Homotrimer.

It is found in the cell outer membrane. Forms pores that allow passive diffusion of small molecules across the outer membrane. This is Outer membrane protein P2 (ompP2) from Haemophilus influenzae.